The chain runs to 132 residues: MASIAGSAVSFAKPVKAINTNSLSFSGARRGNAFLRLQPVPMRFAVCCSAKQDTVEKVCEIVKKQLAVPEGTEVCGTTKFSDLGADSLDTVEIVMGLEEEFQISVEETSAQAIATVEDAATLIDKLVSAKSS.

The transit peptide at 1–49 directs the protein to the chloroplast; it reads MASIAGSAVSFAKPVKAINTNSLSFSGARRGNAFLRLQPVPMRFAVCCS. One can recognise a Carrier domain in the interval 52-127; the sequence is QDTVEKVCEI…DAATLIDKLV (76 aa). Ser87 carries the O-(pantetheine 4'-phosphoryl)serine modification.

The protein belongs to the acyl carrier protein (ACP) family. Post-translationally, 4'-phosphopantetheine is transferred from CoA to a specific serine of apo-ACP by acpS. This modification is essential for activity because fatty acids are bound in thioester linkage to the sulfhydryl of the prosthetic group.

The protein resides in the plastid. It is found in the chloroplast. Its pathway is lipid metabolism; fatty acid biosynthesis. Functionally, carrier of the growing fatty acid chain in fatty acid biosynthesis. This chain is Acyl carrier protein 3, chloroplastic (ACL1.3), found in Hordeum vulgare (Barley).